Reading from the N-terminus, the 346-residue chain is DNA-directed RNA polymerases I and III subunit RPAC1 (346 aa).

Position 2 is an N-acetylalanine (Ala2).

The protein belongs to the archaeal Rpo3/eukaryotic RPB3 RNA polymerase subunit family. Component of the RNA polymerase I and RNA polymerase III complexes consisting of at least 13 and 17 subunits, respectively. Pol I complex consists of a ten-subunit catalytic core composed of POLR1A/RPA1, POLR1B/RPA2, POLR1C/RPAC1, POLR1D/RPAC2, POLR1H/RPA12, POLR2E/RPABC1, POLR2F/RPABC2, POLR2H/RPABC3, POLR2K/RPABC4 and POLR2L/RPABC5; a mobile stalk subunit POLR1F/RPA43 protruding from the core and additional subunits homologous to general transcription factors POLR1E/RPA49 and POLR1G/RPA34. Part of Pol I pre-initiation complex (PIC), in which Pol I core assembles with RRN3 and promoter-bound UTBF and SL1/TIF-IB complex. Pol III complex consists of a ten-subunit catalytic core composed of POLR3A/RPC1, POLR3B/RPC2, POLR1C/RPAC1, POLR1D/RPAC2, POLR3K/RPC10, POLR2E/RPABC1, POLR2F/RPABC2, POLR2H/RPABC3, POLR2K/RPABC4 and POLR2L/RPABC5; a mobile stalk composed of two subunits POLR3H/RPC8 and CRCP/RPC9, protruding from the core and functioning primarily in transcription initiation; and additional subunits homologous to general transcription factors of the RNA polymerase II machinery, POLR3C/RPC3-POLR3F/RPC6-POLR3G/RPC7 heterotrimer required for transcription initiation and POLR3D/RPC4-POLR3E/RPC5 heterodimer involved in both transcription initiation and termination.

It is found in the nucleus. The protein localises to the cytoplasm. Its subcellular location is the cytosol. Its function is as follows. DNA-dependent RNA polymerase catalyzes the transcription of DNA into RNA using the four ribonucleoside triphosphates as substrates. Common component of RNA polymerases I and III which synthesize ribosomal RNA precursors and short non-coding RNAs including 5S rRNA, snRNAs, tRNAs and miRNAs, respectively. POLR1C/RPAC1 is part of the polymerase core and may function as a clamp element that moves to open and close the cleft. In Bos taurus (Bovine), this protein is DNA-directed RNA polymerases I and III subunit RPAC1 (POLR1C).